We begin with the raw amino-acid sequence, 76 residues long: Bowman-Birk type proteinase inhibitor DE-4 (76 aa).

7 disulfide bridges follow: C15-C69, C16-C31, C19-C65, C21-C29, C39-C46, C43-C58, and C48-C56.

Belongs to the Bowman-Birk serine protease inhibitor family.

In Macrotyloma axillare (Perennial horse gram), this protein is Bowman-Birk type proteinase inhibitor DE-4.